The sequence spans 213 residues: 3-hexulose-6-phosphate synthase 2 (213 aa).

It belongs to the HPS/KGPDC family. HPS subfamily.

The enzyme catalyses D-ribulose 5-phosphate + formaldehyde = D-arabino-hex-3-ulose 6-phosphate. It participates in one-carbon metabolism; formaldehyde assimilation via RuMP pathway; D-fructose 6-phosphate from D-ribulose 5-phosphate and formaldehyde: step 1/2. Catalyzes the condensation of ribulose 5-phosphate with formaldehyde to form 3-hexulose 6-phosphate. The chain is 3-hexulose-6-phosphate synthase 2 from Staphylococcus saprophyticus subsp. saprophyticus (strain ATCC 15305 / DSM 20229 / NCIMB 8711 / NCTC 7292 / S-41).